Reading from the N-terminus, the 275-residue chain is NH(3)-dependent NAD(+) synthetase (275 aa).

Residue G46–S53 participates in ATP binding. Residue D52 coordinates Mg(2+). A deamido-NAD(+)-binding site is contributed by R140. T160 is an ATP binding site. A Mg(2+)-binding site is contributed by E165. Deamido-NAD(+) contacts are provided by K173 and D180. The ATP site is built by K189 and T211. H260–K261 lines the deamido-NAD(+) pocket.

Belongs to the NAD synthetase family. Homodimer.

The catalysed reaction is deamido-NAD(+) + NH4(+) + ATP = AMP + diphosphate + NAD(+) + H(+). It participates in cofactor biosynthesis; NAD(+) biosynthesis; NAD(+) from deamido-NAD(+) (ammonia route): step 1/1. Catalyzes the ATP-dependent amidation of deamido-NAD to form NAD. Uses ammonia as a nitrogen source. The protein is NH(3)-dependent NAD(+) synthetase of Salmonella heidelberg (strain SL476).